We begin with the raw amino-acid sequence, 528 residues long: Protein spinster homolog 1 (528 aa).

Positions Met-1–Arg-49 are disordered. The residue at position 2 (Ala-2) is an N-acetylalanine. Helical transmembrane passes span Ile-50–Leu-70, Gly-98–Leu-118, Leu-127–Gly-147, Val-160–Val-180, Met-187–Ser-207, Trp-218–Val-238, Leu-278–Leu-298, Leu-323–Ile-343, Leu-357–Ala-377, Ile-381–Ile-401, Phe-421–Ile-441, and Met-465–Ile-485. Phosphoserine is present on Ser-518.

The protein belongs to the major facilitator superfamily. Spinster (TC 2.A.1.49) family. Interacts with BCL2 and BCL2L1.

It is found in the lysosome membrane. Its subcellular location is the mitochondrion inner membrane. It catalyses the reaction a 1-acyl-sn-glycero-3-phosphocholine(out) + H(+)(out) = a 1-acyl-sn-glycero-3-phosphocholine(in) + H(+)(in). The catalysed reaction is 1-hexadecanoyl-sn-glycero-3-phosphocholine(out) + H(+)(out) = 1-hexadecanoyl-sn-glycero-3-phosphocholine(in) + H(+)(in). It carries out the reaction 1-(9Z-octadecenoyl)-sn-glycero-3-phosphocholine(out) + H(+)(out) = 1-(9Z-octadecenoyl)-sn-glycero-3-phosphocholine(in) + H(+)(in). The enzyme catalyses 1-(5Z,8Z,11Z,14Z-eicosatetraenoyl)-sn-glycero-3-phosphocholine(out) + H(+)(out) = 1-(5Z,8Z,11Z,14Z-eicosatetraenoyl)-sn-glycero-3-phosphocholine(in) + H(+)(in). It catalyses the reaction 1-(4Z,7Z,10Z,13Z,16Z,19Z-docosahexaenoyl)-sn-glycero-3-phosphocholine(out) + H(+)(out) = 1-(4Z,7Z,10Z,13Z,16Z,19Z-docosahexaenoyl)-sn-glycero-3-phosphocholine(in) + H(+)(in). The catalysed reaction is a 1-acyl-sn-glycero-3-phosphoethanolamine(out) + H(+)(out) = a 1-acyl-sn-glycero-3-phosphoethanolamine(in) + H(+)(in). It carries out the reaction 1-(9Z-octadecenoyl)-sn-glycero-3-phosphoethanolamine(out) + H(+)(out) = 1-(9Z-octadecenoyl)-sn-glycero-3-phosphoethanolamine(in) + H(+)(in). The enzyme catalyses 1-acyl-sn-glycero-3-phospho-(1'-sn-glycerol)(out) + H(+)(out) = 1-acyl-sn-glycero-3-phospho-(1'-sn-glycerol)(in) + H(+)(in). It catalyses the reaction 1-(9Z-octadecenoyl)-sn-glycero-3-phospho-(1'-sn-glycerol)(out) + H(+)(out) = 1-(9Z-octadecenoyl)-sn-glycero-3-phospho-(1'-sn-glycerol)(in) + H(+)(in). The catalysed reaction is a 1-O-(1Z-alkenyl)-sn-glycero-3-phosphocholine(out) + H(+)(out) = a 1-O-(1Z-alkenyl)-sn-glycero-3-phosphocholine(in) + H(+)(in). It carries out the reaction 1-(1Z-hexadecenyl)-sn-glycero-3-phosphocholine(out) + H(+)(out) = 1-(1Z-hexadecenyl)-sn-glycero-3-phosphocholine(in) + H(+)(in). The enzyme catalyses a 1-O-(1Z-alkenyl)-sn-glycero-3-phosphoethanolamine(out) + H(+)(out) = a 1-O-(1Z-alkenyl)-sn-glycero-3-phosphoethanolamine(in) + H(+)(in). It catalyses the reaction 1-O-(1Z-hexadecenyl)-sn-glycero-3-phosphoethanolamine(out) + H(+)(out) = 1-O-(1Z-hexadecenyl)-sn-glycero-3-phosphoethanolamine(in) + H(+)(in). Functionally, plays a critical role in the phospholipid salvage pathway from lysosomes to the cytosol. Mediates the rate-limiting, proton-dependent, lysosomal efflux of lysophospholipids, which can then be reacylated by acyltransferases in the endoplasmic reticulum to form phospholipids. Selective for zwitterionic headgroups such as lysophosphatidylcholine (LPC) and lysophosphatidylethanolamine (LPE), can also transport lysophosphatidylglycerol (LPG), but not other anionic lysophospholipids, sphingosine, nor sphingomyelin. Transports lysophospholipids with saturated, monounsaturated, and polyunsaturated fatty acids, such as 1-hexadecanoyl-sn-glycero-3-phosphocholine, 1-(9Z-octadecenoyl)-sn-glycero-3-phosphocholine and 1-(4Z,7Z,10Z,13Z,16Z,19Z-docosahexaenoyl)-sn-glycero-3-phosphocholine, respectively. Can also transport lysoplasmalogen (LPC with a fatty alcohol) such as 1-(1Z-hexadecenyl)-sn-glycero-3-phosphocholine. Lysosomal LPC could function as intracellular signaling messenger. Essential player in lysosomal homeostasis. Crucial for cell survival under conditions of nutrient limitation. May be involved in necrotic or autophagic cell death. The sequence is that of Protein spinster homolog 1 (SPNS1) from Homo sapiens (Human).